The following is a 269-amino-acid chain: MSFVIATFYHFVKLSNYYDMKDEIKAACDNFELKGTILLAEEGINATISGERNAINKIFNFLCSDYRLKDLTWKESAAKYQPFSKMKVRLKREIVNLGVSNLDTSLRGKYIDPDHWDDFISQPDVLVIDTRNEYEVKLGKFKNAINPYIQYFREFPQWAKSFSKNKNLKVAMYCTGGIRCEKSTAYMKSLGFNDVYHLKGGILSYLERTHNKNGNWEGECFVFDDRIAINSSLAPSNKIKCIFCSNQVSADELKSVSRGQVVCSDCNPS.

The Rhodanese domain maps to Ser-121–Gly-214. The active-site Cysteine persulfide intermediate is the Cys-174.

Belongs to the TrhO family.

It carries out the reaction uridine(34) in tRNA + AH2 + O2 = 5-hydroxyuridine(34) in tRNA + A + H2O. Catalyzes oxygen-dependent 5-hydroxyuridine (ho5U) modification at position 34 in tRNAs. This Wolbachia sp. subsp. Brugia malayi (strain TRS) protein is tRNA uridine(34) hydroxylase.